The chain runs to 139 residues: Large ribosomal subunit protein eL32 (139 aa).

Belongs to the eukaryotic ribosomal protein eL32 family.

In Encephalitozoon cuniculi (strain GB-M1) (Microsporidian parasite), this protein is Large ribosomal subunit protein eL32 (RPL32).